The sequence spans 198 residues: RNA-free ribonuclease P (198 aa).

It belongs to the HARP family.

It carries out the reaction Endonucleolytic cleavage of RNA, removing 5'-extranucleotides from tRNA precursor.. RNA-free RNase P that catalyzes the removal of the 5'-leader sequence from pre-tRNA to produce the mature 5'-terminus. In Nitrosococcus oceani (strain ATCC 19707 / BCRC 17464 / JCM 30415 / NCIMB 11848 / C-107), this protein is RNA-free ribonuclease P.